The chain runs to 326 residues: Thrombopoietin (326 aa).

The first 21 residues, 1–21 (MELTDLLLVAILLLTARLTLS), serve as a signal peptide directing secretion. Cystine bridges form between C28/C172 and C50/C106. Residues N197, N206, N235, N249, and N256 are each glycosylated (N-linked (GlcNAc...) asparagine). The interval 307–326 (FPPSPTFPTPGSPPQLPPVS) is disordered. Residues 308–326 (PPSPTFPTPGSPPQLPPVS) are compositionally biased toward pro residues.

It belongs to the EPO/TPO family.

The protein resides in the secreted. Its function is as follows. Lineage-specific cytokine affecting the proliferation and maturation of megakaryocytes from their committed progenitor cells. It acts at a late stage of megakaryocyte development. It may be the major physiological regulator of circulating platelets. The sequence is that of Thrombopoietin (Thpo) from Rattus norvegicus (Rat).